The following is a 350-amino-acid chain: S-adenosylmethionine:tRNA ribosyltransferase-isomerase (350 aa).

The protein belongs to the QueA family. In terms of assembly, monomer.

It localises to the cytoplasm. The enzyme catalyses 7-aminomethyl-7-carbaguanosine(34) in tRNA + S-adenosyl-L-methionine = epoxyqueuosine(34) in tRNA + adenine + L-methionine + 2 H(+). Its pathway is tRNA modification; tRNA-queuosine biosynthesis. Functionally, transfers and isomerizes the ribose moiety from AdoMet to the 7-aminomethyl group of 7-deazaguanine (preQ1-tRNA) to give epoxyqueuosine (oQ-tRNA). This chain is S-adenosylmethionine:tRNA ribosyltransferase-isomerase, found in Bacillus cereus (strain G9842).